A 460-amino-acid chain; its full sequence is Oxysterols receptor LXR-beta (460 aa).

Residues 1-14 are compositionally biased toward low complexity; the sequence is MSSPTTSSLDTPLP. The tract at residues 1–78 is disordered; the sequence is MSSPTTSSLD…PERKRKKGPA (78 aa). The transactivation AF-1; required for ligand-independent transactivation function stretch occupies residues 1–85; it reads MSSPTTSSLD…GPAPKMLGHE (85 aa). The span at 36–45 shows a compositional bias: pro residues; sequence EPWPGGPDPD. Residues 84-161 constitute a DNA-binding region (nuclear receptor); it reads HELCRVCGDK…AGMREQCVLS (78 aa). NR C4-type zinc fingers lie at residues 87 to 107 and 125 to 149; these read CRVCGDKASGFHYNVLSCEGC and CRGGGTCQMDAFMRRKCQQCRLRKC. Residues 169 to 216 form a disordered region; it reads KIRKQQQESQSQSQSPVGPQGSSSSASGPGASPGGSEAGSQGSGEGEG. Over residues 175–198 the composition is skewed to low complexity; it reads QESQSQSQSPVGPQGSSSSASGPG. Over residues 199–215 the composition is skewed to gly residues; the sequence is ASPGGSEAGSQGSGEGE. A transactivation AF-2; required for ligand-dependent transactivation function; mediates interaction with CCAR2 region spans residues 219–460; that stretch reads LTAAQELMIQ…LLSEIWDVHE (242 aa). The 239-residue stretch at 222 to 460 folds into the NR LBD domain; it reads AQELMIQQLV…LLSEIWDVHE (239 aa). Glycyl lysine isopeptide (Lys-Gly) (interchain with G-Cter in SUMO2) cross-links involve residues Lys409 and Lys447.

Belongs to the nuclear hormone receptor family. NR1 subfamily. As to quaternary structure, forms a heterodimer with RXR. Interacts with CCAR2 (via N-terminus) in a ligand-independent manner. Interacts (when sumoylated) with GPS2; interaction with GPS2 onto hepatic acute phase protein promoters prevents N-Cor corepressor complex dissociation. Interacts with ABCA12 and ABCA1; this interaction is required for ABCA1 localization to the cell surface and is necessary for its normal activity and stability. Post-translationally, sumoylated by SUMO2 at Lys-409 and Lys-447 during the hepatic acute phase response, leading to promote interaction with GPS2 and prevent N-Cor corepressor complex dissociation. In terms of tissue distribution, ubiquitous.

The protein localises to the nucleus. Its function is as follows. Nuclear receptor that exhibits a ligand-dependent transcriptional activation activity. Binds preferentially to double-stranded oligonucleotide direct repeats having the consensus half-site sequence 5'-AGGTCA-3' and 4-nt spacing (DR-4). Regulates cholesterol uptake through MYLIP-dependent ubiquitination of LDLR, VLDLR and LRP8; DLDLR and LRP8. Interplays functionally with RORA for the regulation of genes involved in liver metabolism. Induces LPCAT3-dependent phospholipid remodeling in endoplasmic reticulum (ER) membranes of hepatocytes, driving SREBF1 processing and lipogenesis. Via LPCAT3, triggers the incorporation of arachidonate into phosphatidylcholines of ER membranes, increasing membrane dynamics and enabling triacylglycerols transfer to nascent very low-density lipoprotein (VLDL) particles. Via LPCAT3 also counteracts lipid-induced ER stress response and inflammation, likely by modulating SRC kinase membrane compartmentalization and limiting the synthesis of lipid inflammatory mediators. Plays an anti-inflammatory role during the hepatic acute phase response by acting as a corepressor: inhibits the hepatic acute phase response by preventing dissociation of the N-Cor corepressor complex. This is Oxysterols receptor LXR-beta (NR1H2) from Homo sapiens (Human).